We begin with the raw amino-acid sequence, 451 residues long: tRNA modification GTPase MnmE (451 aa).

Positions 25, 87, and 127 each coordinate (6S)-5-formyl-5,6,7,8-tetrahydrofolate. The 153-residue stretch at 222–374 (GLRVALVGRP…FVQVLLERCG (153 aa)) folds into the TrmE-type G domain. Position 232 (Asn232) interacts with K(+). Residues 232–237 (NVGKSS), 251–257 (TELPGTT), and 276–279 (DTAG) contribute to the GTP site. Residue Ser236 participates in Mg(2+) binding. K(+) contacts are provided by Thr251, Leu253, and Thr256. Thr257 provides a ligand contact to Mg(2+). A (6S)-5-formyl-5,6,7,8-tetrahydrofolate-binding site is contributed by Lys451.

The protein belongs to the TRAFAC class TrmE-Era-EngA-EngB-Septin-like GTPase superfamily. TrmE GTPase family. In terms of assembly, homodimer. Heterotetramer of two MnmE and two MnmG subunits. K(+) is required as a cofactor.

It localises to the cytoplasm. Functionally, exhibits a very high intrinsic GTPase hydrolysis rate. Involved in the addition of a carboxymethylaminomethyl (cmnm) group at the wobble position (U34) of certain tRNAs, forming tRNA-cmnm(5)s(2)U34. The sequence is that of tRNA modification GTPase MnmE from Synechococcus sp. (strain CC9902).